Reading from the N-terminus, the 908-residue chain is 26S proteasome non-ATPase regulatory subunit 2 (908 aa).

Position 1 is an N-acetylmethionine (Met1). The tract at residues 1–52 is disordered; that stretch reads MEEGGRDKAPVQPQQSPAAALGGTDEKPSGKERRDAGDKDKEQELSEEDKQL. A compositionally biased stretch (low complexity) spans 10–20; that stretch reads PVQPQQSPAAA. Residue Ser16 is modified to Phosphoserine. Thr24 carries the phosphothreonine modification. Residues 24 to 52 are compositionally biased toward basic and acidic residues; it reads TDEKPSGKERRDAGDKDKEQELSEEDKQL. Phosphoserine is present on residues Ser29 and Ser147. Tyr194 carries the post-translational modification Phosphotyrosine. Ser361 and Ser363 each carry phosphoserine. PC repeat units lie at residues 409 to 442, 443 to 479, 480 to 514, 517 to 551, and 560 to 589; these read SAAA…YIKS, GALL…TMRL, GSIF…SMEV, VTAL…TELK, and LGLG…PFRS. At Lys551 the chain carries N6-acetyllysine. The segment covering 623–643 has biased composition (basic and acidic residues); that stretch reads KEKEEDKDKKEKKDKDKKEAP. Residues 623–645 form a disordered region; sequence KEKEEDKDKKEKKDKDKKEAPAD. 2 PC repeats span residues 692–723 and 742–757; these read LALA…EVSY and AAML…KDPN. Residues 708-903 form a required for interaction with UBLCP1 region; it reads DTLSKFSHDA…LEGFVILRKN (196 aa).

It belongs to the proteasome subunit S2 family. In terms of assembly, component of the 19S proteasome regulatory particle complex. The 26S proteasome consists of a 20S core particle (CP) and two 19S regulatory subunits (RP). The regulatory particle is made of a lid composed of 9 subunits, a base containing 6 ATPases and few additional components including PSMD2. Interacts with RPGRIP1L. Interacts with CRY1 in a KDM8-dependent manner. Interacts (via C-terminus) with phosphatase UBLCP1 (via ubiquitin-like domain); the interaction recruits UBLCP1 to the 19S regulatory particle where it dephosphorylates 19S subunit PSMC2/RPT1 which impairs PSMC2 ATPase activity and disrupts 26S proteasome assembly.

Its function is as follows. Component of the 26S proteasome, a multiprotein complex involved in the ATP-dependent degradation of ubiquitinated proteins. This complex plays a key role in the maintenance of protein homeostasis by removing misfolded or damaged proteins, which could impair cellular functions, and by removing proteins whose functions are no longer required. Therefore, the proteasome participates in numerous cellular processes, including cell cycle progression, apoptosis, or DNA damage repair. Binds to the intracellular domain of tumor necrosis factor type 1 receptor. The binding domain of TRAP1 and TRAP2 resides outside the death domain of TNFR1. In Pongo abelii (Sumatran orangutan), this protein is 26S proteasome non-ATPase regulatory subunit 2 (PSMD2).